Reading from the N-terminus, the 283-residue chain is tRNA-cytidine(32) 2-sulfurtransferase (283 aa).

The PP-loop motif motif lies at Ser37–Ser42. 3 residues coordinate [4Fe-4S] cluster: Cys112, Cys115, and Cys203.

This sequence belongs to the TtcA family. Homodimer. Requires Mg(2+) as cofactor. [4Fe-4S] cluster is required as a cofactor.

The protein resides in the cytoplasm. It catalyses the reaction cytidine(32) in tRNA + S-sulfanyl-L-cysteinyl-[cysteine desulfurase] + AH2 + ATP = 2-thiocytidine(32) in tRNA + L-cysteinyl-[cysteine desulfurase] + A + AMP + diphosphate + H(+). The protein operates within tRNA modification. In terms of biological role, catalyzes the ATP-dependent 2-thiolation of cytidine in position 32 of tRNA, to form 2-thiocytidine (s(2)C32). The sulfur atoms are provided by the cysteine/cysteine desulfurase (IscS) system. The protein is tRNA-cytidine(32) 2-sulfurtransferase of Legionella pneumophila (strain Paris).